We begin with the raw amino-acid sequence, 341 residues long: MKEKILLGGYTKRVSKGVYSVLLDTKAAELSSLNEVAAVQNPTYITLDEKGHLYTCAADSNGGGIAAFDFDGETATHLGNVTTTGAPLCYVAVDEARQLVYGANYHLGEVRVYKIQANGSLRLTDTVKHTGSGPRPEQASSHVHYSDLTPDGRLVTCDLGTDEVTVYDVIGEGKLNIATIYRAEKGMGARHITFHPNGKIAYLVGELNSTIEVLSYNEEKGRFARLQTISTLPEDYHGANGVAAIRISSDGKFLYTSNRGHDSLTTYKVSPLGTKLETIGWTNTEGHIPRDFNFNKTEDYIIVAHQESDNLSLFLRDKKTGTLTLEQKDFYAPEITCVLPL.

It belongs to the cycloisomerase 2 family.

This is an uncharacterized protein from Lactococcus lactis subsp. lactis (strain IL1403) (Streptococcus lactis).